We begin with the raw amino-acid sequence, 322 residues long: Ribosomal RNA small subunit methyltransferase H (322 aa).

Residues 34-36 (GGH), aspartate 59, phenylalanine 86, aspartate 112, and glutamine 119 each bind S-adenosyl-L-methionine.

It belongs to the methyltransferase superfamily. RsmH family.

The protein localises to the cytoplasm. The enzyme catalyses cytidine(1402) in 16S rRNA + S-adenosyl-L-methionine = N(4)-methylcytidine(1402) in 16S rRNA + S-adenosyl-L-homocysteine + H(+). In terms of biological role, specifically methylates the N4 position of cytidine in position 1402 (C1402) of 16S rRNA. The chain is Ribosomal RNA small subunit methyltransferase H from Chlorobium limicola (strain DSM 245 / NBRC 103803 / 6330).